Consider the following 558-residue polypeptide: Ubiquitin carboxyl-terminal hydrolase 30 homolog (558 aa).

The helical transmembrane segment at Ile6–Pro26 threads the bilayer. The 512-residue stretch at Ala39 to Gly550 folds into the USP domain. Cys48 acts as the Nucleophile in catalysis. Residues Leu267–Ser300 are disordered. Positions Pro280–Gln289 are enriched in low complexity. The active-site Proton acceptor is the His506.

It belongs to the peptidase C19 family.

The protein resides in the mitochondrion outer membrane. It catalyses the reaction Thiol-dependent hydrolysis of ester, thioester, amide, peptide and isopeptide bonds formed by the C-terminal Gly of ubiquitin (a 76-residue protein attached to proteins as an intracellular targeting signal).. Functionally, deubiquitinating enzyme that acts as a key inhibitor of mitophagy by counteracting the action of parkin (park). The chain is Ubiquitin carboxyl-terminal hydrolase 30 homolog from Drosophila melanogaster (Fruit fly).